A 313-amino-acid polypeptide reads, in one-letter code: Probable pyridoxal 5'-phosphate synthase subunit PDX1.2 (313 aa).

Asp-42 contacts D-ribose 5-phosphate. The Schiff-base intermediate with D-ribose 5-phosphate role is filled by Lys-99. Residue Gly-171 coordinates D-ribose 5-phosphate. A D-glyceraldehyde 3-phosphate-binding site is contributed by Arg-183. Residues Gly-232 and Gly-253–Ser-254 each bind D-ribose 5-phosphate.

Belongs to the PdxS/SNZ family.

It catalyses the reaction aldehydo-D-ribose 5-phosphate + D-glyceraldehyde 3-phosphate + L-glutamine = pyridoxal 5'-phosphate + L-glutamate + phosphate + 3 H2O + H(+). It participates in cofactor biosynthesis; pyridoxal 5'-phosphate biosynthesis. Catalyzes the formation of pyridoxal 5'-phosphate from ribose 5-phosphate (RBP), glyceraldehyde 3-phosphate (G3P) and ammonia. The ammonia is provided by PDX2. Can also use ribulose 5-phosphate and dihydroxyacetone phosphate as substrates, resulting from enzyme-catalyzed isomerization of RBP and G3P, respectively. Also plays an indirect role in resistance to singlet oxygen-generating photosensitizers. This Oryza sativa subsp. japonica (Rice) protein is Probable pyridoxal 5'-phosphate synthase subunit PDX1.2 (PDX12).